The sequence spans 335 residues: GTPase Obg (335 aa).

The Obg domain maps to 1-159; it reads MQFIDRSEIE…RKLLLELKLL (159 aa). The OBG-type G domain maps to 160–328; the sequence is AEVGIIGLPN…LLARVWQVLE (169 aa). GTP is bound by residues 166–173, 191–195, 213–216, 280–283, and 309–311; these read GLPNAGKS, FTTLV, DIPG, NKAD, and SAA. 2 residues coordinate Mg(2+): Ser-173 and Thr-193.

Belongs to the TRAFAC class OBG-HflX-like GTPase superfamily. OBG GTPase family. As to quaternary structure, monomer. It depends on Mg(2+) as a cofactor.

The protein localises to the cytoplasm. Its function is as follows. An essential GTPase which binds GTP, GDP and possibly (p)ppGpp with moderate affinity, with high nucleotide exchange rates and a fairly low GTP hydrolysis rate. Plays a role in control of the cell cycle, stress response, ribosome biogenesis and in those bacteria that undergo differentiation, in morphogenesis control. This chain is GTPase Obg, found in Gloeobacter violaceus (strain ATCC 29082 / PCC 7421).